Here is a 278-residue protein sequence, read N- to C-terminus: Thioredoxin-related transmembrane protein 1 (278 aa).

A signal peptide spans 1-26; sequence MAHLGRLMVPLAALVLLLWAVPGAHG. A Thioredoxin domain is found at 27-132; the sequence is RRNNVRVLTD…FINFVSDKEW (106 aa). The Extracellular segment spans residues 27 to 181; it reads RRNNVRVLTD…DLGIPAWGSY (155 aa). Residues C56 and C59 each act as nucleophile in the active site. C56 and C59 form a disulfide bridge. A helical transmembrane segment spans residues 182 to 202; the sequence is LVFAFATVLSGLLLGLCMIFV. The Cytoplasmic segment spans residues 203–278; it reads ADCLCPSKRR…VGLPSATDTS (76 aa). Residues C205 and C207 are each lipidated (S-palmitoyl cysteine). Polar residues predominate over residues 217–226; sequence QYAKKTSPEF. The interval 217–278 is disordered; that stretch reads QYAKKTSPEF…VGLPSATDTS (62 aa). The span at 235-251 shows a compositional bias: acidic residues; that stretch reads EEQEADEEDVSEEEAED. Phosphoserine is present on residues S245 and S278.

Interacts with ATP2A2. Post-translationally, palmitoylated; palmitoylation is required for localization to mitochondria-associated endoplasmic reticulum membrane (MAM).

The protein resides in the endoplasmic reticulum membrane. It localises to the mitochondrion membrane. It is found in the secreted. It catalyses the reaction Catalyzes the rearrangement of -S-S- bonds in proteins.. In terms of biological role, thiredoxin domain-containing protein that participates in various redox reactions through the reversible oxidation of its active center dithiol to a disulfide and catalyze dithiol-disulfide exchange reactions. Acts as a key inhibitor of the alternative triglyceride biosynthesis pathway by inhibiting the activity of TMEM68/DIESL at the endoplasmic reticulum, thereby restricting accumulation of triacylglycerol. The alternative triglyceride biosynthesis pathway mediates formation of triacylglycerol from diacylglycerol and membrane phospholipids. Acts as a protein disulfide isomerase by catalyzing formation or reduction of disulfide bonds. Specifically mediates formation of disulfide bonds of transmembrane proteins at the endoplasmic reticulum membrane. Involved in ER-associated degradation (ERAD) via its protein disulfide isomerase activity by acting on folding-defective polypeptides at the endoplasmic reticulum membrane. Acts as a negative regulator of platelet aggregation following secretion in the extracellular space. Acts as a regulator of endoplasmic reticulum-mitochondria contact sites via its ability to regulate redox signals. Regulates endoplasmic reticulum-mitochondria Ca(2+) flux. This is Thioredoxin-related transmembrane protein 1 from Mus musculus (Mouse).